Consider the following 171-residue polypeptide: Large ribosomal subunit protein bL9 (171 aa).

The protein belongs to the bacterial ribosomal protein bL9 family.

Binds to the 23S rRNA. The polypeptide is Large ribosomal subunit protein bL9 (Rickettsia conorii (strain ATCC VR-613 / Malish 7)).